The chain runs to 287 residues: tRNA pseudouridine synthase B (287 aa).

Aspartate 38 functions as the Nucleophile in the catalytic mechanism.

This sequence belongs to the pseudouridine synthase TruB family. Type 1 subfamily.

The enzyme catalyses uridine(55) in tRNA = pseudouridine(55) in tRNA. Its function is as follows. Responsible for synthesis of pseudouridine from uracil-55 in the psi GC loop of transfer RNAs. The chain is tRNA pseudouridine synthase B from Fusobacterium nucleatum subsp. nucleatum (strain ATCC 25586 / DSM 15643 / BCRC 10681 / CIP 101130 / JCM 8532 / KCTC 2640 / LMG 13131 / VPI 4355).